Here is a 509-residue protein sequence, read N- to C-terminus: Probable basic-leucine zipper transcription factor H (509 aa).

The segment at 1–42 (MMNSPRSLDSSDGSVDSSSVYSGTSSFGSSFTSSTGSGFTNS) is disordered. Residues 10–39 (SSDGSVDSSSVYSGTSSFGSSFTSSTGSGF) show a composition bias toward low complexity. The region spanning 50 to 113 (AKKKKIRQMQ…NENYLKINQL (64 aa)) is the bZIP domain. Positions 51 to 77 (KKKKIRQMQNRQSAAQYRERKKEYLEK) are basic motif. A leucine-zipper region spans residues 78 to 99 (LETIVDNLESDRNQLLQQTKQL). 4 disordered regions span residues 134 to 185 (LLSK…SNNG), 223 to 275 (FSHL…SRFN), 290 to 414 (IENV…IINN), and 465 to 509 (SNNN…GIPK). Low complexity-rich tracts occupy residues 226–248 (LQQQ…SPIP), 255–269 (PIQQ…QNIN), 292–350 (NVNN…SNRS), 361–414 (QQQQ…IINN), 465–483 (SNNN…NSPS), and 490–509 (NGGI…GIPK).

It belongs to the bZIP family.

The protein localises to the nucleus. Its function is as follows. Probable transcriptional regulator. In Dictyostelium discoideum (Social amoeba), this protein is Probable basic-leucine zipper transcription factor H (bzpH).